The primary structure comprises 196 residues: Molybdenum cofactor guanylyltransferase (196 aa).

Residues 14-16 (LAG), K27, D73, and D106 contribute to the GTP site. D106 provides a ligand contact to Mg(2+).

It belongs to the MobA family. In terms of assembly, monomer. It depends on Mg(2+) as a cofactor.

It localises to the cytoplasm. The catalysed reaction is Mo-molybdopterin + GTP + H(+) = Mo-molybdopterin guanine dinucleotide + diphosphate. Functionally, transfers a GMP moiety from GTP to Mo-molybdopterin (Mo-MPT) cofactor (Moco or molybdenum cofactor) to form Mo-molybdopterin guanine dinucleotide (Mo-MGD) cofactor. The sequence is that of Molybdenum cofactor guanylyltransferase from Acidiphilium cryptum (strain JF-5).